An 876-amino-acid chain; its full sequence is Alanine--tRNA ligase (876 aa).

Lys74 bears the N6-acetyllysine mark. The Zn(2+) site is built by His564, His568, Cys666, and His670.

It belongs to the class-II aminoacyl-tRNA synthetase family. As to quaternary structure, homotetramer. Zn(2+) serves as cofactor.

It is found in the cytoplasm. The enzyme catalyses tRNA(Ala) + L-alanine + ATP = L-alanyl-tRNA(Ala) + AMP + diphosphate. In terms of biological role, catalyzes the attachment of alanine to tRNA(Ala) in a two-step reaction: alanine is first activated by ATP to form Ala-AMP and then transferred to the acceptor end of tRNA(Ala). Also edits incorrectly charged Ser-tRNA(Ala) and Gly-tRNA(Ala) via its editing domain. This chain is Alanine--tRNA ligase, found in Escherichia coli (strain SMS-3-5 / SECEC).